The following is a 339-amino-acid chain: D-erythrose-4-phosphate dehydrogenase (339 aa).

Position 11-12 (11-12 (RI)) interacts with NAD(+). Substrate-binding positions include 158 to 160 (SCT), R204, 217 to 218 (TK), and R240. C159 acts as the Nucleophile in catalysis. N322 is a binding site for NAD(+).

It belongs to the glyceraldehyde-3-phosphate dehydrogenase family. Epd subfamily. As to quaternary structure, homotetramer.

The protein localises to the cytoplasm. It carries out the reaction D-erythrose 4-phosphate + NAD(+) + H2O = 4-phospho-D-erythronate + NADH + 2 H(+). It functions in the pathway cofactor biosynthesis; pyridoxine 5'-phosphate biosynthesis; pyridoxine 5'-phosphate from D-erythrose 4-phosphate: step 1/5. Its function is as follows. Catalyzes the NAD-dependent conversion of D-erythrose 4-phosphate to 4-phosphoerythronate. This is D-erythrose-4-phosphate dehydrogenase from Aliivibrio fischeri (strain MJ11) (Vibrio fischeri).